We begin with the raw amino-acid sequence, 181 residues long: Large ribosomal subunit protein uL5c (181 aa).

This sequence belongs to the universal ribosomal protein uL5 family. As to quaternary structure, part of the 50S ribosomal subunit; contacts the 5S rRNA.

The protein localises to the plastid. Its subcellular location is the chloroplast. In terms of biological role, binds 5S rRNA, forms part of the central protuberance of the 50S subunit. The sequence is that of Large ribosomal subunit protein uL5c (rpl5) from Porphyra purpurea (Red seaweed).